A 763-amino-acid polypeptide reads, in one-letter code: Dual specificity tyrosine-phosphorylation-regulated kinase 1A (763 aa).

The residue at position 14 (Ser14) is a Phosphoserine. The segment at 32 to 57 (GQMPHSHQYSDRRQPNISDQQVSALS) is disordered. Positions 46 to 57 (PNISDQQVSALS) are enriched in polar residues. Tyr111 is subject to Phosphotyrosine; by autocatalysis. The interval 115–136 (KKRRHQQGQGDDSSHKKERKVY) is disordered. The Bipartite nuclear localization signal signature appears at 117-134 (RRHQQGQGDDSSHKKERK). Phosphotyrosine; by autocatalysis is present on Tyr140. Tyr145 bears the Phosphotyrosine mark. The residue at position 159 (Tyr159) is a Phosphotyrosine; by autocatalysis. Positions 159 to 479 (YEIDSLIGKG…PYYALQHSFF (321 aa)) constitute a Protein kinase domain. Residue 165-173 (IGKGSFGQV) participates in ATP binding. Tyr177 carries the phosphotyrosine; by autocatalysis modification. Position 188 (Lys188) interacts with ATP. Tyr219 carries the post-translational modification Phosphotyrosine; by autocatalysis. Position 238 to 241 (238 to 241 (FEML)) interacts with ATP. Residue Asp287 is the Proton acceptor of the active site. At Ser310 the chain carries Phosphoserine; by autocatalysis. Residues Tyr319 and Tyr321 each carry the phosphotyrosine; by autocatalysis modification. Thr402 carries the post-translational modification Phosphothreonine; by autocatalysis. The disordered stretch occupies residues 408-442 (TKDGKREYKPPGTRKLHNILGVETGGPGGRRAGES). A Phosphotyrosine; by autocatalysis modification is found at Tyr449. A compositionally biased stretch (polar residues) spans 485 to 501 (EGTNTSNSVSTSPAMEQ). 3 disordered regions span residues 485–540 (EGTN…HSGG), 596–679 (NALH…GNQA), and 744–763 (DREESPMTGVCVQQSPVASS). Residues 502–525 (SQSSGTTSSTSSSSGGSSGTSNSG) show a composition bias toward low complexity. 2 positions are modified to phosphoserine: Ser529 and Ser538. The histidine-rich domain (HRD) stretch occupies residues 595-625 (QNALHHHHGNSSHHHHHHHHHHHHHGQQALG). Basic residues predominate over residues 598–620 (LHHHHGNSSHHHHHHHHHHHHHG). Residues 634–645 (NSPTNSSSTQDS) show a composition bias toward polar residues. Positions 654–672 (SMTSLSSSTTSSSTSSSST) are enriched in low complexity. 2 positions are modified to phosphoserine: Ser748 and Ser758. Positions 754 to 763 (CVQQSPVASS) are enriched in polar residues.

Belongs to the protein kinase superfamily. CMGC Ser/Thr protein kinase family. MNB/DYRK subfamily. As to quaternary structure, interacts with RAD54L2/ARIP4. Interacts with CRY2. Interacts with RANBP9. Interacts with WDR68. Interacts with SIRT1. (Microbial infection) Interacts with human adenovirus 5 E1A protein. In terms of processing, autophosphorylated on numerous tyrosine residues. Can also autophosphorylate on serine and threonine residues (in vitro). As to expression, ubiquitous. Highest levels in skeletal muscle, testis, fetal lung and fetal kidney.

It is found in the nucleus. The protein resides in the nucleus speckle. It carries out the reaction L-seryl-[protein] + ATP = O-phospho-L-seryl-[protein] + ADP + H(+). The catalysed reaction is L-threonyl-[protein] + ATP = O-phospho-L-threonyl-[protein] + ADP + H(+). It catalyses the reaction L-tyrosyl-[protein] + ATP = O-phospho-L-tyrosyl-[protein] + ADP + H(+). The enzyme catalyses [DNA-directed RNA polymerase] + ATP = phospho-[DNA-directed RNA polymerase] + ADP + H(+). Its activity is regulated as follows. Inhibited by RANBP9. Inhibited by harmine, leucettamine B and leucettine L41. Functionally, dual-specificity kinase which possesses both serine/threonine and tyrosine kinase activities. Exhibits a substrate preference for proline at position P+1 and arginine at position P-3. Plays an important role in double-strand breaks (DSBs) repair following DNA damage. Mechanistically, phosphorylates RNF169 and increases its ability to block accumulation of TP53BP1 at the DSB sites thereby promoting homologous recombination repair (HRR). Also acts as a positive regulator of transcription by acting as a CTD kinase that mediates phosphorylation of the CTD (C-terminal domain) of the large subunit of RNA polymerase II (RNAP II) POLR2A. May play a role in a signaling pathway regulating nuclear functions of cell proliferation. Modulates alternative splicing by phosphorylating the splice factor SRSF6. Has pro-survival function and negatively regulates the apoptotic process. Promotes cell survival upon genotoxic stress through phosphorylation of SIRT1. This in turn inhibits p53/TP53 activity and apoptosis. Phosphorylates SEPTIN4, SEPTIN5 and SF3B1 at 'Thr-434'. The chain is Dual specificity tyrosine-phosphorylation-regulated kinase 1A from Homo sapiens (Human).